The following is a 364-amino-acid chain: Aminomethyltransferase (364 aa).

The protein belongs to the GcvT family. The glycine cleavage system is composed of four proteins: P, T, L and H.

It catalyses the reaction N(6)-[(R)-S(8)-aminomethyldihydrolipoyl]-L-lysyl-[protein] + (6S)-5,6,7,8-tetrahydrofolate = N(6)-[(R)-dihydrolipoyl]-L-lysyl-[protein] + (6R)-5,10-methylene-5,6,7,8-tetrahydrofolate + NH4(+). Its function is as follows. The glycine cleavage system catalyzes the degradation of glycine. This is Aminomethyltransferase from Bacillus licheniformis (strain ATCC 14580 / DSM 13 / JCM 2505 / CCUG 7422 / NBRC 12200 / NCIMB 9375 / NCTC 10341 / NRRL NRS-1264 / Gibson 46).